A 512-amino-acid chain; its full sequence is Apolipoprotein N-acyltransferase (512 aa).

The next 6 helical transmembrane spans lie at 5-25 (LDKY…FAAA), 56-76 (FAVS…FYWI), 92-112 (VPLT…CFWL), 118-138 (LPRG…TEFA), 168-188 (LGGI…LVLA), and 195-215 (SGKR…GYTA). The 245-residue stretch at 233–477 (LQGNIDQTLK…ETVLEGHIKG (245 aa)) folds into the CN hydrolase domain. The active-site Proton acceptor is the Glu271. The active site involves Lys337. Cys389 acts as the Nucleophile in catalysis. The helical transmembrane segment at 487-507 (TGSSWWLMGILALAALILFIF) threads the bilayer.

It belongs to the CN hydrolase family. Apolipoprotein N-acyltransferase subfamily.

It localises to the cell inner membrane. It catalyses the reaction N-terminal S-1,2-diacyl-sn-glyceryl-L-cysteinyl-[lipoprotein] + a glycerophospholipid = N-acyl-S-1,2-diacyl-sn-glyceryl-L-cysteinyl-[lipoprotein] + a 2-acyl-sn-glycero-3-phospholipid + H(+). It functions in the pathway protein modification; lipoprotein biosynthesis (N-acyl transfer). Catalyzes the phospholipid dependent N-acylation of the N-terminal cysteine of apolipoprotein, the last step in lipoprotein maturation. The polypeptide is Apolipoprotein N-acyltransferase (Neisseria meningitidis serogroup B (strain ATCC BAA-335 / MC58)).